The sequence spans 200 residues: Probable GTP-binding protein EngB (200 aa).

Positions 25-199 (SGYEVAFAGR…ISLLDRWYEW (175 aa)) constitute an EngB-type G domain. GTP is bound by residues 33–40 (GRSNAGKS), 60–64 (GRTQL), 78–81 (DLPG), 145–148 (TKAD), and 178–180 (FSS). Residues Ser-40 and Thr-62 each coordinate Mg(2+).

Belongs to the TRAFAC class TrmE-Era-EngA-EngB-Septin-like GTPase superfamily. EngB GTPase family. It depends on Mg(2+) as a cofactor.

In terms of biological role, necessary for normal cell division and for the maintenance of normal septation. The protein is Probable GTP-binding protein EngB of Legionella pneumophila (strain Corby).